Consider the following 257-residue polypeptide: uncharacterized protein (257 aa).

Disordered stretches follow at residues 1–178 and 194–248; these read MAMF…SYDS and AITK…LAGN. Residues 12-21 show a composition bias toward basic residues; sequence SKLKKGRRKL. The span at 50 to 71 shows a compositional bias: low complexity; it reads NTNSGSSSDGEDGLLTSSGSDS. Residues 72–94 are compositionally biased toward polar residues; that stretch reads VFNSTDYFSTPEDSQNCTPSDVS. A compositionally biased stretch (basic and acidic residues) spans 102-114; sequence LDFKPADVLHDSE. Over residues 115-126 the composition is skewed to polar residues; it reads NSTSPKFITSLV. Residues 127–136 are compositionally biased toward low complexity; that stretch reads SSDSENSGAD. Residues 163–178 are compositionally biased toward acidic residues; the sequence is ITSEEDCCVQEDSYDS.

It belongs to the herpesviridae BKRF4 family.

This is an uncharacterized protein from Saimiriine herpesvirus 2 (strain 11) (SaHV-2).